The primary structure comprises 446 residues: Phosphoglucosamine mutase (446 aa).

Serine 101 (phosphoserine intermediate) is an active-site residue. Serine 101, aspartate 240, aspartate 242, and aspartate 244 together coordinate Mg(2+). Serine 101 carries the post-translational modification Phosphoserine.

This sequence belongs to the phosphohexose mutase family. Mg(2+) is required as a cofactor. Activated by phosphorylation.

It catalyses the reaction alpha-D-glucosamine 1-phosphate = D-glucosamine 6-phosphate. Functionally, catalyzes the conversion of glucosamine-6-phosphate to glucosamine-1-phosphate. In Coxiella burnetii (strain Dugway 5J108-111), this protein is Phosphoglucosamine mutase.